We begin with the raw amino-acid sequence, 591 residues long: Aspartate--tRNA(Asp/Asn) ligase (591 aa).

Residue Glu175 participates in L-aspartate binding. The segment at 199-202 is aspartate; the sequence is QQYK. L-aspartate is bound by residues Arg221 and His450. 221-223 contributes to the ATP binding site; it reads RDE. Glu484 lines the ATP pocket. An L-aspartate-binding site is contributed by Arg491. ATP is bound at residue 536-539; that stretch reads GVDR.

It belongs to the class-II aminoacyl-tRNA synthetase family. Type 1 subfamily. Homodimer.

It is found in the cytoplasm. It carries out the reaction tRNA(Asx) + L-aspartate + ATP = L-aspartyl-tRNA(Asx) + AMP + diphosphate. Its function is as follows. Aspartyl-tRNA synthetase with relaxed tRNA specificity since it is able to aspartylate not only its cognate tRNA(Asp) but also tRNA(Asn). Reaction proceeds in two steps: L-aspartate is first activated by ATP to form Asp-AMP and then transferred to the acceptor end of tRNA(Asp/Asn). In Rhodopseudomonas palustris (strain ATCC BAA-98 / CGA009), this protein is Aspartate--tRNA(Asp/Asn) ligase.